The primary structure comprises 1085 residues: DNA polymerase (1085 aa).

Residues Tyr-1059–Ala-1085 form a disordered region.

The protein belongs to the DNA polymerase type-B family. In terms of assembly, heterodimer with the terminal protein; this heterodimer binds to bp 9 to 18 of the genome. Forms a complex with viral pTP, DBP and hosts NFIA and POU2F1/OCT1 for initiation of replication.

The protein localises to the host nucleus. It carries out the reaction DNA(n) + a 2'-deoxyribonucleoside 5'-triphosphate = DNA(n+1) + diphosphate. In terms of biological role, eukaryotic-type DNA polymerase involved in viral genomic replication. DNA synthesis is protein primed, and acts in a strand displacement replication. Eukaryotic-type DNA polymerase involved in viral genomic replication. DNA synthesis is protein primed, and acts in a strand displacement replication. Assembles in complex with viral pTP, DBP, host NFIA and host POU2F1/OCT1 on viral origin of replication. The polymerase covalently transfers dCMP onto pTP, thereby initiating complementary strand synthesis. The sequence is that of DNA polymerase from Pantherophis guttatus (Corn snake).